Reading from the N-terminus, the 420-residue chain is Acetyl-CoA acetyltransferase, mitochondrial (420 aa).

The N-terminal 33 residues, 1–33 (MAFCGPRTAARLSHSTRALHYTHRGHVSQRTLN), are a transit peptide targeting the mitochondrion. Catalysis depends on C119, which acts as the Acyl-thioester intermediate. Residues Y212, 251 to 253 (RVD), and K256 each bind CoA. Residue Y212 coordinates K(+). A273, A274, and A276 together coordinate K(+). Residue S277 coordinates CoA. A K(+)-binding site is contributed by V374. C406 (proton donor/acceptor) is an active-site residue.

The protein belongs to the thiolase-like superfamily. Thiolase family. As to quaternary structure, homotetramer.

Its subcellular location is the mitochondrion. It carries out the reaction 2 acetyl-CoA = acetoacetyl-CoA + CoA. The enzyme catalyses propanoyl-CoA + acetyl-CoA = 2-methyl-3-oxobutanoyl-CoA + CoA. Its pathway is lipid metabolism; fatty acid beta-oxidation. This is one of the enzymes that catalyzes the last step of the mitochondrial beta-oxidation pathway, an aerobic process breaking down fatty acids into acetyl-CoA. Using free coenzyme A/CoA, catalyzes the thiolytic cleavage of medium- to long-chain 3-oxoacyl-CoAs into acetyl-CoA and a fatty acyl-CoA shortened by two carbon atoms. The activity of the enzyme is reversible and it can also catalyze the condensation of two acetyl-CoA molecules into acetoacetyl-CoA. Thereby, it plays a major role in ketone body metabolism. This Xenopus tropicalis (Western clawed frog) protein is Acetyl-CoA acetyltransferase, mitochondrial (acat1).